The chain runs to 468 residues: Pancreatic lipase-related protein 2 (468 aa).

Residues 1–16 (MLLCWIVSLLLATVGG) form the signal peptide. An intrachain disulfide couples Cys-20 to Cys-26. The tract at residues 92-104 (VHGFIDKGEDGWL) is required for galactolipase activity. Cysteines 108 and 119 form a disulfide. Ser-170 (nucleophile) is an active-site residue. Residue Asp-194 is the Charge relay system of the active site. 4 residues coordinate Ca(2+): Glu-205, Arg-208, Asp-210, and Asp-213. Cys-255 and Cys-279 are joined by a disulfide. Residues 256-278 (QKNILSTIVDINGIWEGTQNFVA) are required for galactolipase activity. The active-site Charge relay system is the His-281. 2 cysteine pairs are disulfide-bonded: Cys-303–Cys-314 and Cys-317–Cys-322. N-linked (GlcNAc...) asparagine glycosylation is found at Asn-352 and Asn-427. One can recognise a PLAT domain in the interval 356 to 468 (WRYKVSVTLS…EDVLQSLYPC (113 aa)). A disulfide bridge connects residues Cys-452 and Cys-468.

It belongs to the AB hydrolase superfamily. Lipase family. In terms of tissue distribution, expressed in pancreatic acinar cells (at protein level).

It localises to the secreted. Its subcellular location is the zymogen granule membrane. It is found in the cell projection. The protein resides in the neuron projection. It catalyses the reaction a triacylglycerol + H2O = a diacylglycerol + a fatty acid + H(+). It carries out the reaction a 1,2-diacyl-3-O-(beta-D-galactosyl)-sn-glycerol + 2 H2O = 3-beta-D-galactosyl-sn-glycerol + 2 a fatty acid + 2 H(+). The enzyme catalyses 1,2,3-tri-(9Z-octadecenoyl)-glycerol + H2O = di-(9Z)-octadecenoylglycerol + (9Z)-octadecenoate + H(+). The catalysed reaction is di-(9Z)-octadecenoylglycerol + H2O = (9Z-octadecenoyl)-glycerol + (9Z)-octadecenoate + H(+). It catalyses the reaction (9Z-octadecenoyl)-glycerol + H2O = glycerol + (9Z)-octadecenoate + H(+). It carries out the reaction 1-(9Z-octadecenoyl)-glycerol + H2O = glycerol + (9Z)-octadecenoate + H(+). The enzyme catalyses 1,2,3-tripropanoylglycerol + H2O = dipropanoylglycerol + propanoate + H(+). The catalysed reaction is 1,2,3-tributanoylglycerol + H2O = dibutanoylglycerol + butanoate + H(+). It catalyses the reaction 1,2,3-trioctanoylglycerol + H2O = dioctanoylglycerol + octanoate + H(+). It carries out the reaction 1,2-didecanoylglycerol + H2O = decanoylglycerol + decanoate + H(+). The enzyme catalyses long chain 1,2-diacyl-3-O-beta-D-galactosyl-sn-glycerol + H2O = long chain acyl-3-O-beta-D-galactosyl-sn-glycerol + a fatty acid + H(+). The catalysed reaction is 1,2-dioctanoyl-3-O-beta-D-galactosyl-sn-glycerol + H2O = octanoyl-3-(beta-D-galactosyl)-sn-glycerol + octanoate + H(+). It catalyses the reaction 1,2-didodecanoyl-3-beta-D-galactosyl-sn-glycerol + H2O = dodecanoyl-3-beta-D-galactosyl-sn-glycerol + dodecanoate + H(+). It carries out the reaction 1-beta-D-galactosyl-2,3-didodecanoyl-sn-glycerol + H2O = 1-beta-D-galactosyl-dodecanoyl-sn-glycerol + dodecanoate + H(+). The enzyme catalyses a 1,2-diacyl-3-O-[alpha-D-galactosyl-(1-&gt;6)-beta-D-galactosyl]-sn-glycerol + H2O = acyl-3-O-[alpha-D-galactosyl-(1-&gt;6)-beta-D-galactosyl]-sn-glycerol + a fatty acid + H(+). The catalysed reaction is long chain 1,2-diacyl-3-O-[alpha-D-galactosyl-(1-&gt;6)-beta-D-galactosyl]-sn-glycerol + H2O = long chain acyl-3-O-[alpha-D-galactosyl-(1-&gt;6)-beta-D-galactosyl]-sn-glycerol + a fatty acid + H(+). It catalyses the reaction 1,2-dioctanoyl-3-O-[alpha-D-galactosyl-(1-&gt;6)-beta-D-galactosyl]-sn-glycerol + H2O = octanoyl-3-O-[alpha-D-galactosyl-(1-&gt;6)-beta-D-galactosyl]-sn-glycerol + octanoate + H(+). It carries out the reaction 1,2-didodecanoyl-3-O-[alpha-D-galactosyl-(1-&gt;6)-beta-D-galactosyl]-sn-glycerol + H2O = dodecanoyl-3-O-[alpha-D-galactosyl-(1-&gt;6)-beta-D-galactosyl]-sn-glycerol + dodecanoate + H(+). The enzyme catalyses a 1,2-diacyl-sn-glycero-3-phosphocholine + H2O = a monoacyl-sn-glycero-3-phosphocholine + a fatty acid + H(+). It participates in glycerolipid metabolism; triacylglycerol degradation. It functions in the pathway glycolipid metabolism. Its activity is regulated as follows. CLPS stimulates triacylglycerol lipase activity. Triacylglycerol lipase activity is not inhibited by increasing bile salt concentration. Lipase that primarily hydrolyzes triglycerides and galactosylglycerides. In neonates, may play a major role in pancreatic digestion of dietary fats such as milk fat globules enriched in long-chain triglycerides. Hydrolyzes short-, medium- and long-chain fatty acyls in triglycerides without apparent positional specificity. Can completely deacylate triacylglycerols. When the liver matures and bile salt synthesis increases, likely functions mainly as a galactolipase and monoacylglycerol lipase. Hydrolyzes monogalactosyldiglycerols (MGDG) and digalactosyldiacylglycerols (DGDG) present in a plant-based diet, releasing long-chain polyunsaturated fatty acids. Hydrolyzes medium- and long-chain fatty acyls in galactolipids. May act together with LIPF to hydrolyze partially digested triglycerides. Hydrolyzes long-chain monoglycerides with high efficiency. In cytotoxic T cells, contributes to perforin-dependent cell lysis, but is unlikely to mediate direct cytotoxicity. Also has low phospholipase activity. In neurons, required for the localization of the phospholipid 1-oleoyl-2-palmitoyl-PC (OPPC) to neurite tips through acyl chain remodeling of membrane phospholipids. The resulting OPPC-rich lipid membrane domain recruits the t-SNARE protein STX4 by selectively interacting with the STX4 transmembrane domain and this promotes surface expression of the dopamine transporter SLC6A3/DAT at neurite tips by facilitating fusion of SLC6A3-containing transport vesicles with the plasma membrane. The protein is Pancreatic lipase-related protein 2 of Rattus norvegicus (Rat).